A 637-amino-acid chain; its full sequence is Transcription factor PHYTOCHROME INTERACTING FACTOR-LIKE 15 (637 aa).

The span at 35 to 46 (FFGGTGGGGGGS) shows a compositional bias: gly residues. 3 disordered regions span residues 35–54 (FFGG…QERQ), 146–213 (ASLP…EGVM), and 356–397 (ECSA…RRRR). Over residues 149–170 (PASNHNGATNNRNAPVATTTTR) the composition is skewed to polar residues. A basic motif region spans residues 384 to 397 (RTAEVHNLSERRRR). Positions 384-397 (RTAEVHNLSERRRR) are enriched in basic and acidic residues. Residues 384-433 (RTAEVHNLSERRRRDRINEKMRALQELIPNCNKIDKASMLDEAIEYLKTL) enclose the bHLH domain. Positions 398-433 (DRINEKMRALQELIPNCNKIDKASMLDEAIEYLKTL) are helix-loop-helix motif. Residues 601-637 (GDNENFRIPSSAQTKSSQFSDGTGKGTNARERDGAET) form a disordered region. Residues 608-621 (IPSSAQTKSSQFSD) show a composition bias toward polar residues. Basic and acidic residues predominate over residues 628–637 (NARERDGAET).

Belongs to the bHLH protein family. In terms of assembly, interacts with LF and PRR1.

The protein resides in the nucleus. Its function is as follows. Transcription factor that may act as negative regulator of phyB-dependent light signal transduction. This Oryza sativa subsp. japonica (Rice) protein is Transcription factor PHYTOCHROME INTERACTING FACTOR-LIKE 15.